The chain runs to 903 residues: Disintegrin and metalloproteinase domain-containing protein 12 (903 aa).

The N-terminal stretch at 1-31 (MAERPARRAPPARALLLALAGALLAPRAARG) is a signal peptide. A propeptide spanning residues 32–205 (MSLWDQRGTY…SQMRARRHKR (174 aa)) is cleaved from the precursor. Asparagine 112, asparagine 147, and asparagine 157 each carry an N-linked (GlcNAc...) asparagine glycan. Positions 175 to 182 (GLCGSQHN) match the Cysteine switch motif. Cysteine 177 lines the Zn(2+) pocket. Asparagine 182 and asparagine 185 each carry an N-linked (GlcNAc...) asparagine glycan. Residues 206 to 706 (ETLKMTKYVE…GPIRQADNQG (501 aa)) lie on the Extracellular side of the membrane. Residues 212–414 (KYVELVIVAD…GMGMCLFNLP (203 aa)) enclose the Peptidase M12B domain. Cystine bridges form between cysteine 323–cysteine 409, cysteine 365–cysteine 393, and cysteine 367–cysteine 376. Residue histidine 348 participates in Zn(2+) binding. Glutamate 349 is a catalytic residue. 2 residues coordinate Zn(2+): histidine 352 and histidine 358. The 87-residue stretch at 422–508 (GRKCGNGYVE…HCPANVYLHD (87 aa)) folds into the Disintegrin domain. The N-linked (GlcNAc...) asparagine glycan is linked to asparagine 450. A disulfide bridge links cysteine 480 with cysteine 500. An N-linked (GlcNAc...) asparagine glycan is attached at asparagine 649. The 33-residue stretch at 654–686 (GVHKCAMQCHGRGVCNNRKNCHCEAHWAPPFCD) folds into the EGF-like domain. Cystine bridges form between cysteine 658/cysteine 668, cysteine 662/cysteine 674, and cysteine 676/cysteine 685. Residues 707–727 (LTVGILVSILCLLAAGFVVYL) form a helical membrane-spanning segment. Over 728 to 903 (KRKTLMRLLF…PRPSHNAYIK (176 aa)) the chain is Cytoplasmic. Disordered stretches follow at residues 753-790 (SRTPSGPHLGQAHHTPGKGLLMNRAPHFNTPKDRHSLK) and 819-903 (HQTP…AYIK). Short sequence motifs (SH3-binding; class II) lie at residues 824 to 830 (APSGPAR) and 846 to 852 (KPSPPQK). Short sequence motifs (SH3-binding; class I) lie at residues 830–837 (RPLPASPA), 852–858 (KPLPADP), and 881–887 (RPAPIRP). The span at 847-856 (PSPPQKPLPA) shows a compositional bias: pro residues. A Phosphotyrosine; by SRC modification is found at tyrosine 901.

In terms of assembly, interacts with alpha-actinin-2 and with syndecans. Interacts with SH3PXD2A. Interacts with FST3. Interacts with RACK1; the interaction is required for PKC-dependent translocation of ADAM12 to the cell membrane. Requires Zn(2+) as cofactor. The precursor is cleaved by a furin endopeptidase. In terms of tissue distribution, expressed during early developing mesenchymal cells that give rise to skeletal muscle, bones and visceral organs. Not expressed in adult normal muscle but expressed in regenerating muscle.

The protein localises to the membrane. In terms of biological role, involved in skeletal muscle regeneration, specifically at the onset of cell fusion. Also involved in macrophage-derived giant cells (MGC) and osteoclast formation from mononuclear precursors. This is Disintegrin and metalloproteinase domain-containing protein 12 (Adam12) from Mus musculus (Mouse).